Reading from the N-terminus, the 228-residue chain is Protein boule (228 aa).

One can recognise an RRM domain in the interval 33-110 (NRIFVGGISG…RKLNIAPAIK (78 aa)). In terms of domain architecture, DAZ spans 151–178 (PAAGVPAIYPPSAMQYQPFYQYYSVPMN). A compositionally biased stretch (low complexity) spans 193–214 (PLLHSPTSNPHSPHSQSHPQSP). The disordered stretch occupies residues 193–228 (PLLHSPTSNPHSPHSQSHPQSPCWSIEDLRDTLPRV). Basic and acidic residues predominate over residues 219-228 (EDLRDTLPRV).

This sequence belongs to the RRM DAZ family. In terms of assembly, interacts with the translational regulator orb2. As to expression, testis specific.

It is found in the nucleus. It localises to the cytoplasm. Functionally, RNA-binding protein that plays a central role in spermatogenesis. Required for meiotic entry and germline differentiation, at the transition between G2 and M phases of meiosis I. Acts by regulating translation of specific mRNAs, possibly by binding to their 3'-UTR. Essential for translation of twine (twe) mRNA. Required for the expression of various genes such as CG6784, CG17210, CG15841 scpr-B, scpr-C, and rho-6. The protein is Protein boule (bol) of Drosophila melanogaster (Fruit fly).